A 163-amino-acid chain; its full sequence is Phosphopantetheine adenylyltransferase (163 aa).

T9 provides a ligand contact to substrate. ATP is bound by residues 9–10 and H17; that span reads TF. Substrate contacts are provided by K41, T73, and R87. ATP is bound by residues 88-90, E98, and 123-129; these read GLR and FSFISSS.

It belongs to the bacterial CoaD family. In terms of assembly, homohexamer. Requires Mg(2+) as cofactor.

The protein localises to the cytoplasm. It catalyses the reaction (R)-4'-phosphopantetheine + ATP + H(+) = 3'-dephospho-CoA + diphosphate. Its pathway is cofactor biosynthesis; coenzyme A biosynthesis; CoA from (R)-pantothenate: step 4/5. Its function is as follows. Reversibly transfers an adenylyl group from ATP to 4'-phosphopantetheine, yielding dephospho-CoA (dPCoA) and pyrophosphate. The protein is Phosphopantetheine adenylyltransferase of Desulfitobacterium hafniense (strain DSM 10664 / DCB-2).